A 626-amino-acid chain; its full sequence is Hormonally up-regulated neu tumor-associated kinase homolog B (626 aa).

ATP contacts are provided by residues 1–2 (KV) and Lys-17. The Protein kinase domain occupies 1 to 246 (KVREGLHVGT…IQQALANRWL (246 aa)). Asp-112 acts as the Proton acceptor in catalysis. The segment covering 336-357 (KYKMNKNSYEERRSKDLEKRGE) has biased composition (basic and acidic residues). Disordered stretches follow at residues 336–407 (KYKM…ESFG), 477–574 (VNRE…RSRG), and 590–615 (QVVS…PGYA). The segment covering 374 to 390 (SHRQSTCLTPQGHSSSK) has biased composition (polar residues). Residues 392-405 (PIKERRSSKSERES) are compositionally biased toward basic and acidic residues. Polar residues predominate over residues 518–532 (DNTSPLKGHSNQASF). The span at 539–555 (SPSSPESMSPTSPHSPS) shows a compositional bias: low complexity. The segment covering 556 to 566 (CNNNISGNLGS) has biased composition (polar residues).

The protein belongs to the protein kinase superfamily. CAMK Ser/Thr protein kinase family. SNF1 subfamily. In the egg, expressed predominantly in the animal hemisphere. This pattern of expression persists throughout the cleavage and blastula stages. At the gastrula stage, expression is restricted to the ectoderm. In later-stage embryos, expressed over the entire embryonic surface including the open neural plate at stage 15 and the neural tube at stage 22. In tadpoles, strongly expressed in the neural tube, motor neurons, brain regions and sensory organs (otic vesicle and eye). Also expressed in the perisomitic mesoderm, brachial arches and embryonic epidermis of tadpoles.

The catalysed reaction is L-seryl-[protein] + ATP = O-phospho-L-seryl-[protein] + ADP + H(+). The enzyme catalyses L-threonyl-[protein] + ATP = O-phospho-L-threonyl-[protein] + ADP + H(+). The polypeptide is Hormonally up-regulated neu tumor-associated kinase homolog B (hunk-b) (Xenopus laevis (African clawed frog)).